The chain runs to 607 residues: Elongation factor 4 (607 aa).

The region spanning 11–193 (GKIRNFSIIA…QIVEKVPAPT (183 aa)) is the tr-type G domain. Residues 23-28 (DHGKST) and 140-143 (NKID) contribute to the GTP site.

The protein belongs to the TRAFAC class translation factor GTPase superfamily. Classic translation factor GTPase family. LepA subfamily.

It localises to the cell membrane. It catalyses the reaction GTP + H2O = GDP + phosphate + H(+). Functionally, required for accurate and efficient protein synthesis under certain stress conditions. May act as a fidelity factor of the translation reaction, by catalyzing a one-codon backward translocation of tRNAs on improperly translocated ribosomes. Back-translocation proceeds from a post-translocation (POST) complex to a pre-translocation (PRE) complex, thus giving elongation factor G a second chance to translocate the tRNAs correctly. Binds to ribosomes in a GTP-dependent manner. This Streptococcus pneumoniae (strain Taiwan19F-14) protein is Elongation factor 4.